The following is a 506-amino-acid chain: Gamma-aminobutyric acid receptor subunit epsilon (506 aa).

The signal sequence occupies residues 1–22 (MLSKVLPVLLGILLILQSRVEG). Positions 23-66 (PQTESKNEASSRDVVYGPQPQPLENQLLSEETKSTETETGSRVG) are disordered. Over 23 to 280 (PQTESKNEAS…FNVSRRFGYV (258 aa)) the chain is Extracellular. Asn-134 is a glycosylation site (N-linked (GlcNAc...) asparagine). Cys-195 and Cys-209 form a disulfide bridge. N-linked (GlcNAc...) asparagine glycosylation occurs at Asn-252. The helical transmembrane segment at 281-301 (AFQNYVPSSVTTMLSWVSFWI) threads the bilayer. Residues 302–307 (KTESAP) are Cytoplasmic-facing. A helical transmembrane segment spans residues 308-327 (ARTSLGITSVLTMTTLGTFS). Residues 328 to 343 (RKNFPRVSYITALDFY) lie on the Extracellular side of the membrane. The chain crosses the membrane as a helical span at residues 344 to 364 (IAICFVFCFCALLEFAVLNFL). At 365–485 (IYNQTKAHAS…HVYRLDNYSR (121 aa)) the chain is on the cytoplasmic side. Residues 413–438 (EGSDGEERPSCSAQQPPSPGSPEGPR) are disordered. The helical transmembrane segment at 486-506 (VVFPVTFFFFNVLYWLVCLNL) threads the bilayer.

The protein belongs to the ligand-gated ion channel (TC 1.A.9) family. Gamma-aminobutyric acid receptor (TC 1.A.9.5) subfamily. GABRE sub-subfamily. Heteropentamer, formed by a combination of alpha (GABRA1-6), beta (GABRB1-3), gamma (GABRG1-3), delta (GABRD), epsilon (GABRE), rho (GABRR1-3), pi (GABRP) and theta (GABRQ) chains, each subunit exhibiting distinct physiological and pharmacological properties. Expressed in many tissues. Highest levels of expression in adult heart and placenta.

The protein resides in the cell membrane. Its subcellular location is the postsynaptic cell membrane. The catalysed reaction is chloride(in) = chloride(out). Its activity is regulated as follows. Potentiated by pentobarbital, loreclezole, and lanthanum and inhibited by zinc and furosemide. Introduction of the epsilon subunit to the receptor complex resulted in diminished modulatory effects by etomidate, propofol, pregnanolone and flurazepam. Epsilon subunit of the heteropentameric ligand-gated chloride channel gated by gamma-aminobutyric acid (GABA), a major inhibitory neurotransmitter in the brain. GABA-gated chloride channels, also named GABA(A) receptors (GABAAR), consist of five subunits arranged around a central pore and contain GABA active binding site(s) located at the alpha and beta subunit interfaces. When activated by GABA, GABAARs selectively allow the flow of chloride anions across the cell membrane down their electrochemical gradient. GABAARs containing epsilon subunits also permit spontaneous chloride channel activity while preserving the structural information required for GABA-gated openings. GABARs containing epsilon subunit may regulate cardiac function. This Homo sapiens (Human) protein is Gamma-aminobutyric acid receptor subunit epsilon.